The primary structure comprises 364 residues: Paraneoplastic antigen Ma2 homolog (364 aa).

At A2 the chain carries N-acetylalanine. A compositionally biased stretch (acidic residues) spans 335–353; it reads EEEEASFENESIEEPEEGD. A disordered region spans residues 335 to 364; that stretch reads EEEEASFENESIEEPEEGDGYGRWNHEGDD.

It belongs to the PNMA family.

Its subcellular location is the nucleus. The protein resides in the nucleolus. The chain is Paraneoplastic antigen Ma2 homolog (PNMA2) from Pongo abelii (Sumatran orangutan).